Here is a 93-residue protein sequence, read N- to C-terminus: Protein F-93 (93 aa).

In terms of assembly, homodimer.

Its function is as follows. Probable transcription factor that recognizes a (pseudo-)palindromic DNA target sequence. This chain is Protein F-93, found in Saccharolobus solfataricus (Sulfolobus solfataricus).